The sequence spans 95 residues: Co-chaperonin GroES (95 aa).

Belongs to the GroES chaperonin family. Heptamer of 7 subunits arranged in a ring. Interacts with the chaperonin GroEL.

It localises to the cytoplasm. Together with the chaperonin GroEL, plays an essential role in assisting protein folding. The GroEL-GroES system forms a nano-cage that allows encapsulation of the non-native substrate proteins and provides a physical environment optimized to promote and accelerate protein folding. GroES binds to the apical surface of the GroEL ring, thereby capping the opening of the GroEL channel. This chain is Co-chaperonin GroES, found in Staphylococcus saprophyticus subsp. saprophyticus (strain ATCC 15305 / DSM 20229 / NCIMB 8711 / NCTC 7292 / S-41).